Reading from the N-terminus, the 303-residue chain is Ribonucleoside-diphosphate reductase small subunit (303 aa).

Positions 60, 90, and 93 each coordinate Fe cation. The active site involves Tyr-97. The chain crosses the membrane as a helical span at residues 147 to 167 (LLMILIEGIFFASSFASISYL). Residues Glu-153, Glu-187, and His-190 each contribute to the Fe cation site.

Belongs to the ribonucleoside diphosphate reductase small chain family. Heterotetramer composed of a homodimer of the large subunit (R1) and a homodimer of the small subunit (R2). Larger multisubunit protein complex are also active, composed of (R1)n(R2)n. Requires Fe cation as cofactor.

It is found in the host membrane. The enzyme catalyses a 2'-deoxyribonucleoside 5'-diphosphate + [thioredoxin]-disulfide + H2O = a ribonucleoside 5'-diphosphate + [thioredoxin]-dithiol. Ribonucleoside-diphosphate reductase holoenzyme provides the precursors necessary for viral DNA synthesis. Allows virus growth in non-dividing cells, as well as reactivation from latency in infected hosts. Catalyzes the biosynthesis of deoxyribonucleotides from the corresponding ribonucleotides. The chain is Ribonucleoside-diphosphate reductase small subunit from Suid herpesvirus 1 (strain Kaplan) (SuHV-1).